The sequence spans 842 residues: Glucans biosynthesis glucosyltransferase H (842 aa).

The next 7 helical transmembrane spans lie at 140–160, 194–214, 513–533, 568–588, 615–635, 656–676, and 680–700; these read ILLL…KTIL, ILIL…TALM, VFLT…FLAL, IALF…SIIL, VLLA…AFLG, FMRH…MAWL, and FLFW…VSAI.

This sequence belongs to the glycosyltransferase 2 family. OpgH subfamily.

It localises to the cell inner membrane. It participates in glycan metabolism; osmoregulated periplasmic glucan (OPG) biosynthesis. Involved in the biosynthesis of osmoregulated periplasmic glucans (OPGs). This is Glucans biosynthesis glucosyltransferase H from Klebsiella pneumoniae subsp. pneumoniae (strain ATCC 700721 / MGH 78578).